A 269-amino-acid polypeptide reads, in one-letter code: Phosphatidylglycerol--prolipoprotein diacylglyceryl transferase (269 aa).

A run of 7 helical transmembrane segments spans residues 10 to 30, 56 to 76, 91 to 111, 126 to 146, 172 to 192, 200 to 220, and 237 to 257; these read IAVS…LIGF, AIFY…ILFY, IWEG…AMFF, FLAP…FIGG, PSQL…LWFF, YCVS…VEFV, and EGQL…MAGL. An a 1,2-diacyl-sn-glycero-3-phospho-(1'-sn-glycerol)-binding site is contributed by R139.

Belongs to the Lgt family.

The protein localises to the cell inner membrane. The enzyme catalyses L-cysteinyl-[prolipoprotein] + a 1,2-diacyl-sn-glycero-3-phospho-(1'-sn-glycerol) = an S-1,2-diacyl-sn-glyceryl-L-cysteinyl-[prolipoprotein] + sn-glycerol 1-phosphate + H(+). It functions in the pathway protein modification; lipoprotein biosynthesis (diacylglyceryl transfer). Catalyzes the transfer of the diacylglyceryl group from phosphatidylglycerol to the sulfhydryl group of the N-terminal cysteine of a prolipoprotein, the first step in the formation of mature lipoproteins. This chain is Phosphatidylglycerol--prolipoprotein diacylglyceryl transferase, found in Marinomonas sp. (strain MWYL1).